A 260-amino-acid polypeptide reads, in one-letter code: Cytochrome c oxidase subunit 3 (260 aa).

Topologically, residues 1-15 (MTHQTHAYHMVNPSP) are mitochondrial matrix. Residues 16 to 34 (WPLTGALSALLMTSGLAMW) traverse the membrane as a helical segment. Residues 35-40 (FHFNST) lie on the Mitochondrial intermembrane side of the membrane. Residues 41–66 (ALLMIGLTTNMLTMYQWWRDIIREST) traverse the membrane as a helical segment. The Mitochondrial matrix segment spans residues 67–72 (FQGHHT). A helical transmembrane segment spans residues 73 to 105 (PAVQKGLRYGMILFIISEVLFFTGFFWAFYHSS). Over 106–128 (LAPTPELGGCWPPTGIHPLNPLE) the chain is Mitochondrial intermembrane. A helical membrane pass occupies residues 129 to 152 (VPLLNTSVLLASGVSITWAHHSLM). Topologically, residues 153-155 (EGD) are mitochondrial matrix. A helical transmembrane segment spans residues 156-183 (RNHMLQALFITITLGVYFTLLQASEYYE). At 184–190 (APFTISD) the chain is on the mitochondrial intermembrane side. Residues 191-223 (GVYGSTFFVATGFHGLHVIIGSTFLIVCFFRQL) form a helical membrane-spanning segment. The Mitochondrial matrix segment spans residues 224–232 (KFHFTSNHH). Residues 233 to 256 (FGFEAAAWYWHFVDVVWLFLYVSI) form a helical membrane-spanning segment. Residues 257 to 260 (YWWG) are Mitochondrial intermembrane-facing.

Belongs to the cytochrome c oxidase subunit 3 family. Component of the cytochrome c oxidase (complex IV, CIV), a multisubunit enzyme composed of 14 subunits. The complex is composed of a catalytic core of 3 subunits MT-CO1, MT-CO2 and MT-CO3, encoded in the mitochondrial DNA, and 11 supernumerary subunits COX4I, COX5A, COX5B, COX6A, COX6B, COX6C, COX7A, COX7B, COX7C, COX8 and NDUFA4, which are encoded in the nuclear genome. The complex exists as a monomer or a dimer and forms supercomplexes (SCs) in the inner mitochondrial membrane with NADH-ubiquinone oxidoreductase (complex I, CI) and ubiquinol-cytochrome c oxidoreductase (cytochrome b-c1 complex, complex III, CIII), resulting in different assemblies (supercomplex SCI(1)III(2)IV(1) and megacomplex MCI(2)III(2)IV(2)).

It localises to the mitochondrion inner membrane. It catalyses the reaction 4 Fe(II)-[cytochrome c] + O2 + 8 H(+)(in) = 4 Fe(III)-[cytochrome c] + 2 H2O + 4 H(+)(out). Component of the cytochrome c oxidase, the last enzyme in the mitochondrial electron transport chain which drives oxidative phosphorylation. The respiratory chain contains 3 multisubunit complexes succinate dehydrogenase (complex II, CII), ubiquinol-cytochrome c oxidoreductase (cytochrome b-c1 complex, complex III, CIII) and cytochrome c oxidase (complex IV, CIV), that cooperate to transfer electrons derived from NADH and succinate to molecular oxygen, creating an electrochemical gradient over the inner membrane that drives transmembrane transport and the ATP synthase. Cytochrome c oxidase is the component of the respiratory chain that catalyzes the reduction of oxygen to water. Electrons originating from reduced cytochrome c in the intermembrane space (IMS) are transferred via the dinuclear copper A center (CU(A)) of subunit 2 and heme A of subunit 1 to the active site in subunit 1, a binuclear center (BNC) formed by heme A3 and copper B (CU(B)). The BNC reduces molecular oxygen to 2 water molecules using 4 electrons from cytochrome c in the IMS and 4 protons from the mitochondrial matrix. The sequence is that of Cytochrome c oxidase subunit 3 (MT-CO3) from Bos mutus grunniens (Wild yak).